The sequence spans 87 residues: Small ribosomal subunit protein bS20 (87 aa).

A compositionally biased stretch (basic residues) spans 1–11 (MANIKSAKKRA). Residues 1-27 (MANIKSAKKRAVQSEKRRQHNASQRSM) form a disordered region.

Belongs to the bacterial ribosomal protein bS20 family.

In terms of biological role, binds directly to 16S ribosomal RNA. This is Small ribosomal subunit protein bS20 from Histophilus somni (strain 129Pt) (Haemophilus somnus).